The sequence spans 1211 residues: DNA polymerase beta (1211 aa).

Repeat copies occupy residues 1074–1077 (KPAG), 1078–1081 (KPAG), 1082–1085 (NPAG), and 1086–1089 (NPAG). Residues 1074–1089 (KPAGKPAGNPAGNPAG) form a 4 X 4 AA tandem repeats of [NK]-[P]-A-G region.

Belongs to the DNA polymerase type-B family.

The enzyme catalyses DNA(n) + a 2'-deoxyribonucleoside 5'-triphosphate = DNA(n+1) + diphosphate. In terms of biological role, DNA-directed DNA polymerase involved in viral DNA replication. The sequence is that of DNA polymerase beta (DPOL) from African swine fever virus (strain Badajoz 1971 Vero-adapted) (Ba71V).